Reading from the N-terminus, the 78-residue chain is Acyl carrier protein (78 aa).

Residues 2–77 (STIEESVKSI…AAIDFIKESK (76 aa)) form the Carrier domain. S37 carries the O-(pantetheine 4'-phosphoryl)serine modification.

It belongs to the acyl carrier protein (ACP) family. Post-translationally, 4'-phosphopantetheine is transferred from CoA to a specific serine of apo-ACP by AcpS. This modification is essential for activity because fatty acids are bound in thioester linkage to the sulfhydryl of the prosthetic group.

The protein resides in the cytoplasm. It functions in the pathway lipid metabolism; fatty acid biosynthesis. In terms of biological role, carrier of the growing fatty acid chain in fatty acid biosynthesis. The chain is Acyl carrier protein from Wigglesworthia glossinidia brevipalpis.